The sequence spans 212 residues: Disintegrin-like halysetin (212 aa).

The 87-residue stretch at 4–90 (PPVCGNELLE…ECPADVFHKN (87 aa)) folds into the Disintegrin domain. Cystine bridges form between cysteine 7–cysteine 26, cysteine 18–cysteine 36, cysteine 62–cysteine 82, cysteine 69–cysteine 94, cysteine 101–cysteine 106, cysteine 113–cysteine 128, cysteine 151–cysteine 158, cysteine 163–cysteine 174, and cysteine 200–cysteine 205. The D/ECD-tripeptide signature appears at 68-70 (ECD).

Belongs to the venom metalloproteinase (M12B) family. P-III subfamily. P-IIIb sub-subfamily. Monomer. In terms of tissue distribution, expressed by the venom gland.

It is found in the secreted. Inhibits human platelet aggregation stimulated by collagen with an IC(50) of 420 nM. This Gloydius halys (Chinese water mocassin) protein is Disintegrin-like halysetin.